The chain runs to 376 residues: Flap endonuclease 1 (376 aa).

Residues 1–105 are N-domain; it reads MGIKGLSKLL…GELHKRKENA (105 aa). D34 contributes to the Mg(2+) binding site. Residues R47 and R71 each coordinate DNA. Mg(2+)-binding residues include D87, E159, E161, D180, and D182. Residues 123–254 are I-domain; the sequence is QAKKLMKRTA…ITAFELIQQY (132 aa). E159 lines the DNA pocket. The DNA site is built by G232 and D234. D234 is a Mg(2+) binding site. The interaction with PCNA stretch occupies residues 336 to 344; it reads AQGRLDSFF. The interval 354–376 is disordered; it reads SEAASGVKRKKPTTKAKESRKKK. Residues 360-376 are compositionally biased toward basic residues; the sequence is VKRKKPTTKAKESRKKK.

Belongs to the XPG/RAD2 endonuclease family. FEN1 subfamily. In terms of assembly, interacts with PCNA. Three molecules of FEN1 bind to one PCNA trimer with each molecule binding to one PCNA monomer. PCNA stimulates the nuclease activity without altering cleavage specificity. Mg(2+) is required as a cofactor. Post-translationally, phosphorylated. Phosphorylation upon DNA damage induces relocalization to the nuclear plasma.

It localises to the nucleus. Its subcellular location is the nucleolus. It is found in the nucleoplasm. The protein localises to the mitochondrion. In terms of biological role, structure-specific nuclease with 5'-flap endonuclease and 5'-3' exonuclease activities involved in DNA replication and repair. During DNA replication, cleaves the 5'-overhanging flap structure that is generated by displacement synthesis when DNA polymerase encounters the 5'-end of a downstream Okazaki fragment. It enters the flap from the 5'-end and then tracks to cleave the flap base, leaving a nick for ligation. Also involved in the long patch base excision repair (LP-BER) pathway, by cleaving within the apurinic/apyrimidinic (AP) site-terminated flap. Acts as a genome stabilization factor that prevents flaps from equilibrating into structures that lead to duplications and deletions. Also possesses 5'-3' exonuclease activity on nicked or gapped double-stranded DNA, and exhibits RNase H activity. Also involved in replication and repair of rDNA and in repairing mitochondrial DNA. This Entamoeba histolytica (strain ATCC 30459 / HM-1:IMSS / ABRM) protein is Flap endonuclease 1.